The following is a 724-amino-acid chain: Hyperosmolality-gated Ca2+ permeable channel 3.1 (724 aa).

Residues 1–4 (MEFG) are Extracellular-facing. A helical membrane pass occupies residues 5–25 (SFLVSLGTSFVIFVILMLLFT). Over 26–85 (WLSRKSGNAPIYYPNRILKGLEPWEGTSLTRNPFAWMREALTSSEQDVVNLSGVDTAVHF) the chain is Cytoplasmic. The helical transmembrane segment at 86–108 (VFLSTVLGIFACSSLLLLPTLLP) threads the bilayer. Topologically, residues 109–147 (LAATDNNIKNTKNATDTTSKGTFSQLDNLSMANITKKSS) are extracellular. The chain crosses the membrane as a helical span at residues 148 to 170 (RLWAFLGAVYWISLVTYFFLWKA). The Cytoplasmic portion of the chain corresponds to 171–358 (YKHVSSLRAQ…WQNLNIKLFS (188 aa)). The stretch at 241 to 309 (EKLEGYKKKL…KAVLAEKQQT (69 aa)) forms a coiled coil. A helical transmembrane segment spans residues 359-385 (RIIRQYFIYFFVAVTILFYMIPIAFVS). The Extracellular segment spans residues 386–411 (AITTLKNLQRIIPFIKPVVEITAIRT). Residues 412-439 (VLESFLPQIALIVFLAMLPKLLLFLSKA) traverse the membrane as a helical segment. Topologically, residues 440–448 (EGIPSQSHA) are cytoplasmic. A helical membrane pass occupies residues 449-472 (IRAASGKYFYFSVFNVFIGVTLAG). At 473-497 (TLFNTVKDIAKNPKLDMIINLLATS) the chain is on the extracellular side. The chain crosses the membrane as a helical span at residues 498–529 (LPKSATFFLTYVALKFFIGYGLELSRIIPLII). Residues 530–554 (FHLKKKYLCKTEAEVKEAWYPGDLS) are Cytoplasmic-facing. Residues 555–574 (YATRVPGDMLILTITFCYSV) traverse the membrane as a helical segment. Position 575 (Ile575) is a topological domain, extracellular. Residues 576–594 (APLILIFGITYFGLGWLVL) traverse the membrane as a helical segment. The Cytoplasmic segment spans residues 595 to 612 (RNQALKVYVPSYESYGRM). Residues 613-636 (WPHIHQRILAALFLFQVVMFGYLG) traverse the membrane as a helical segment. Residues 637-641 (AKTFF) are Extracellular-facing. Residues 642–662 (YTALVIPLIITSLIFGYVCRQ) form a helical membrane-spanning segment. Over 663 to 724 (KFYGGFEHTA…YQDFNAIAGV (62 aa)) the chain is Cytoplasmic.

The protein belongs to the CSC1 (TC 1.A.17) family. Homodimer.

The protein localises to the membrane. Its function is as follows. Acts as a hyperosmolarity-gated non-selective cation channel that permeates Ca(2+) ions. Mechanosensitive ion channel that converts mechanical stimuli into a flow of ions: activated in response to membrane stretch. Not activated in response to membrane poke. In Arabidopsis thaliana (Mouse-ear cress), this protein is Hyperosmolality-gated Ca2+ permeable channel 3.1.